Reading from the N-terminus, the 222-residue chain is Germin-like protein 11-1 (222 aa).

The N-terminal stretch at 1–23 (MKLSTVLCCYLLLLGLFAPEIIS) is a signal peptide. Residues Cys32 and Cys49 are joined by a disulfide bond. Residues 72–195 (DNMVRSSANI…AMFAPDSEVA (124 aa)) form the Cupin type-1 domain. Residues His111, His113, Glu118, and His157 each contribute to the Mn(2+) site.

This sequence belongs to the germin family. As to quaternary structure, oligomer (believed to be a pentamer but probably hexamer).

The protein resides in the secreted. It is found in the extracellular space. It localises to the apoplast. Its function is as follows. May play a role in plant defense. Probably has no oxalate oxidase activity even if the active site is conserved. In Oryza sativa subsp. japonica (Rice), this protein is Germin-like protein 11-1.